A 113-amino-acid chain; its full sequence is Pancreatic progenitor cell differentiation and proliferation factor A (113 aa).

It belongs to the PPDPF family.

Its function is as follows. Probable regulator of exocrine pancreas development. This chain is Pancreatic progenitor cell differentiation and proliferation factor A (ppdpf-a), found in Xenopus laevis (African clawed frog).